The primary structure comprises 172 residues: Avenin-like a4 (172 aa).

A signal peptide spans 1–19; it reads MKTMFILALIALAATSVVA.

Belongs to the prolamin family. Contains 7 disulfide bonds.

Its function is as follows. Seed storage protein. Not integrated in the gluten polymer through disulfide bonds, unless incorporated by reduction and reoxidation during dough making. Increases dough strength and bread volume, but decreases dough stability when added into a base wheat flour. This Triticum aestivum (Wheat) protein is Avenin-like a4.